A 122-amino-acid chain; its full sequence is Acidic phospholipase A2 5 (122 aa).

Intrachain disulfides connect Cys26–Cys115, Cys28–Cys44, Cys43–Cys95, Cys49–Cys122, Cys50–Cys88, Cys57–Cys81, and Cys75–Cys86. Residues Phe27, Gly29, and Gly31 each contribute to the Ca(2+) site. His47 is a catalytic residue. Asp48 is a Ca(2+) binding site. Asp89 is a catalytic residue.

The protein belongs to the phospholipase A2 family. Group II subfamily. D49 sub-subfamily. In terms of assembly, monomer (predominant). Non-covalently linked homodimers are also observed. Ca(2+) is required as a cofactor. As to expression, expressed by the venom gland.

Its subcellular location is the secreted. It carries out the reaction a 1,2-diacyl-sn-glycero-3-phosphocholine + H2O = a 1-acyl-sn-glycero-3-phosphocholine + a fatty acid + H(+). Preincubation with heparin slightly increase the enzymatic activity. In terms of biological role, snake venom phospholipase A2 (PLA2) that inhibits platelet aggregation induced by ADP, arachidonic acid and PAF. Acts in a enzymatic independent manner on a proteinase-activated receptor (PAR1, F2R) to evoke calcium release through the inositol 1,4,5-trisphosphate receptor (ITPR1, IP3R) and induces mouse aorta contraction. PAR1, phospholipase C and IP3R inhibitors suppress PA2-induced aorta contraction. PLA2 catalyzes the calcium-dependent hydrolysis of the 2-acyl groups in 3-sn-phosphoglycerides. The chain is Acidic phospholipase A2 5 from Trimeresurus stejnegeri (Chinese green tree viper).